The following is a 1544-amino-acid chain: Arf-GAP with Rho-GAP domain, ANK repeat and PH domain-containing protein 3 (1544 aa).

The SAM domain maps to 4 to 68 (PQDLDIAVWL…LRLLQTGTEE (65 aa)). 2 disordered regions span residues 64-147 (TGTE…EQSS) and 167-194 (GRAQ…PTTG). Composition is skewed to pro residues over residues 82-97 (SPSP…PVPK) and 130-139 (EPSPRPPPLP). 2 consecutive PH domains span residues 287–379 (TPLL…SCLK) and 394–483 (RPLR…EAVT). The region spanning 480 to 611 (EAVTETLSDY…LFRKPHPQYP (132 aa)) is the Arf-GAP domain. A C4-type zinc finger spans residues 504–527 (CADCGSSRPDWAAVNLGVVICKQC). The region spanning 907-1088 (TGLQEQQMSR…ELIDGYISVF (182 aa)) is the Rho-GAP domain. A Ras-associating domain is found at 1117 to 1210 (GDLIMEVYIE…ASLLLKKVPL (94 aa)). One can recognise a PH 3 domain in the interval 1223 to 1325 (ESPRVGLLRC…WTTSILKAQH (103 aa)). Thr1348 carries the post-translational modification Phosphothreonine. Tyr1403 and Tyr1408 each carry phosphotyrosine. The disordered stretch occupies residues 1422-1544 (STSFSTTREW…SSPPSSQPLT (123 aa)). The span at 1438-1457 (PLTSQKSLDQPFLSKSSTLG) shows a compositional bias: polar residues. 2 positions are modified to phosphoserine: Ser1444 and Ser1480. 2 stretches are compositionally biased toward low complexity: residues 1482–1492 (EEQLLQELSSL) and 1502–1527 (GLGS…TPGF).

Interacts (via SAM domain) with INPPL1/SHIP2. In terms of processing, tyrosine phosphorylated at a low basal level. PDGF treatment stimulates phosphorylation. Tyrosine phosphorylation is increased in cells that are in the process of becoming attached to a substrate and that start spreading and flattening.

It is found in the cytoplasm. Its subcellular location is the cytoskeleton. It localises to the cell membrane. The protein resides in the cell projection. The protein localises to the lamellipodium. It is found in the ruffle. Phosphatidylinositol 3,4,5-trisphosphate-dependent GTPase-activating protein that modulates actin cytoskeleton remodeling by regulating ARF and RHO family members. Is activated by phosphatidylinositol 3,4,5-trisphosphate (PtdIns(3,4,5)P3) binding. Can be activated by phosphatidylinositol 3,4-bisphosphate (PtdIns(3,4,5)P2) binding, albeit with lower efficiency. Acts on ARF6, RAC1, RHOA and CDC42. Plays a role in the internalization of anthrax toxin. This chain is Arf-GAP with Rho-GAP domain, ANK repeat and PH domain-containing protein 3 (ARAP3), found in Homo sapiens (Human).